The sequence spans 193 residues: Dirigent protein (193 aa).

Residues 1-29 (MGGEKAFSFIFLLFLCFFLANLSASSAHP) form the signal peptide. A disulfide bond links cysteine 40 and cysteine 192. Asparagine 59 and asparagine 129 each carry an N-linked (GlcNAc...) asparagine glycan.

This sequence belongs to the plant dirigent protein family. As to quaternary structure, homodimer. As to expression, expressed in rhizomes, stems, and leaves.

It is found in the secreted. The protein localises to the extracellular space. Its subcellular location is the apoplast. Its pathway is aromatic compound metabolism; phenylpropanoid biosynthesis. In terms of biological role, dirigent proteins impart stereoselectivity on the phenoxy radical-coupling reaction, yielding optically active lignans from two molecules of coniferyl alcohol in the biosynthesis of lignans, flavonolignans, and alkaloids and thus plays a central role in plant secondary metabolism. Also involved in the biosynthesis of etoposide, a chemotherapeutic compound of the topoisomerase inhibitor family. The polypeptide is Dirigent protein (Sinopodophyllum hexandrum (Himalayan may apple)).